We begin with the raw amino-acid sequence, 127 residues long: Holo-[acyl-carrier-protein] synthase (127 aa).

Mg(2+)-binding residues include D9 and E58.

The protein belongs to the P-Pant transferase superfamily. AcpS family. Requires Mg(2+) as cofactor.

It localises to the cytoplasm. It catalyses the reaction apo-[ACP] + CoA = holo-[ACP] + adenosine 3',5'-bisphosphate + H(+). Its function is as follows. Transfers the 4'-phosphopantetheine moiety from coenzyme A to a Ser of acyl-carrier-protein. This Shewanella oneidensis (strain ATCC 700550 / JCM 31522 / CIP 106686 / LMG 19005 / NCIMB 14063 / MR-1) protein is Holo-[acyl-carrier-protein] synthase.